The following is a 555-amino-acid chain: Hydroxylamine reductase (555 aa).

[4Fe-4S] cluster contacts are provided by Cys3, Cys6, Cys18, and Cys25. His252, Glu276, Cys320, Cys407, Cys435, Cys460, Glu494, and Lys496 together coordinate hybrid [4Fe-2O-2S] cluster. Cysteine persulfide is present on Cys407.

It belongs to the HCP family. The cofactor is [4Fe-4S] cluster. It depends on hybrid [4Fe-2O-2S] cluster as a cofactor.

The protein localises to the cytoplasm. It catalyses the reaction A + NH4(+) + H2O = hydroxylamine + AH2 + H(+). Functionally, catalyzes the reduction of hydroxylamine to form NH(3) and H(2)O. In Burkholderia lata (strain ATCC 17760 / DSM 23089 / LMG 22485 / NCIMB 9086 / R18194 / 383), this protein is Hydroxylamine reductase.